Reading from the N-terminus, the 372-residue chain is MVVDLDKYLKPGKDHYLALGLEGSANKLGVGVIKHNKGPLSSTNRAEVLSNIRDTYITPPGEGFLPRDTARHHRNWVVRIIKQALATAKIAGKDIDVICFTQGPGMGAPLQSVVIAARTLAQLWNIPIVGVNHCVGHIEMGREITGAENPVVLYVSGGNTQVIAYSKQRYRIFGETLDIAIGNCLDRFARTLKIPNEPAPGYNIEQMAKKGKHLVPLPYTVKGMDLSMSGILAAIDSIAKEMFGKQQKKLIDEESGEPITAEDLCFSLQETLFSMLVEITERALAHVDSNQVLIVGGVGSNQRLQEMMKLMIQDRKNGQIYATDERFCIDNGIMIAHAGLLSYRTGQTNQLNNTVCTQRFRTDEVFVKWRDD.

A divalent metal cation-binding residues include His-133, His-137, and Tyr-154. Substrate is bound by residues 154 to 158 (YVSGG), Asp-186, Gly-201, Glu-205, and Asn-301. Asp-330 contacts a divalent metal cation.

The protein belongs to the KAE1 / TsaD family. As to quaternary structure, component of the EKC/KEOPS complex composed of at least BUD32, CGI121, GON7, KAE1 and PCC1; the whole complex dimerizes. A divalent metal cation serves as cofactor.

It localises to the cytoplasm. Its subcellular location is the nucleus. It carries out the reaction L-threonylcarbamoyladenylate + adenosine(37) in tRNA = N(6)-L-threonylcarbamoyladenosine(37) in tRNA + AMP + H(+). Functionally, component of the EKC/KEOPS complex that is required for the formation of a threonylcarbamoyl group on adenosine at position 37 (t(6)A37) in tRNAs that read codons beginning with adenine. The complex is probably involved in the transfer of the threonylcarbamoyl moiety of threonylcarbamoyl-AMP (TC-AMP) to the N6 group of A37. KAE1 likely plays a direct catalytic role in this reaction, but requires other protein(s) of the complex to fulfill this activity. The EKC/KEOPS complex also promotes both telomere uncapping and telomere elongation. The complex is required for efficient recruitment of transcriptional coactivators. The chain is tRNA N6-adenosine threonylcarbamoyltransferase from Candida albicans (strain SC5314 / ATCC MYA-2876) (Yeast).